We begin with the raw amino-acid sequence, 313 residues long: Acetyl-coenzyme A carboxylase carboxyl transferase subunit alpha (313 aa).

Residues 30–291 (DLDREISDLE…KMALLQELAF (262 aa)) enclose the CoA carboxyltransferase C-terminal domain.

The protein belongs to the AccA family. As to quaternary structure, acetyl-CoA carboxylase is a heterohexamer composed of biotin carboxyl carrier protein (AccB), biotin carboxylase (AccC) and two subunits each of ACCase subunit alpha (AccA) and ACCase subunit beta (AccD).

It localises to the cytoplasm. The enzyme catalyses N(6)-carboxybiotinyl-L-lysyl-[protein] + acetyl-CoA = N(6)-biotinyl-L-lysyl-[protein] + malonyl-CoA. The protein operates within lipid metabolism; malonyl-CoA biosynthesis; malonyl-CoA from acetyl-CoA: step 1/1. In terms of biological role, component of the acetyl coenzyme A carboxylase (ACC) complex. First, biotin carboxylase catalyzes the carboxylation of biotin on its carrier protein (BCCP) and then the CO(2) group is transferred by the carboxyltransferase to acetyl-CoA to form malonyl-CoA. The polypeptide is Acetyl-coenzyme A carboxylase carboxyl transferase subunit alpha (Zymomonas mobilis subsp. mobilis (strain ATCC 31821 / ZM4 / CP4)).